The primary structure comprises 243 residues: GrpE protein homolog, mitochondrial (243 aa).

The disordered stretch occupies residues 56–79; it reads KKEEPKDENDAAAAEEDANLTEEQ.

It belongs to the GrpE family. Component of the PAM complex, at least composed of mtHsp70, MGE1, TIM44, PAM16, PAM17 and PAM18.

It is found in the mitochondrion matrix. Essential component of the PAM complex, a complex required for the translocation of transit peptide-containing proteins from the inner membrane into the mitochondrial matrix in an ATP-dependent manner. Seems to control the nucleotide-dependent binding of SSC1 to substrate proteins. In Kluyveromyces lactis (strain ATCC 8585 / CBS 2359 / DSM 70799 / NBRC 1267 / NRRL Y-1140 / WM37) (Yeast), this protein is GrpE protein homolog, mitochondrial (mge1).